A 225-amino-acid chain; its full sequence is Putative O-phosphotransferase MT2714 (225 aa).

Residue 30–37 coordinates ATP; the sequence is GGSSAGKT.

To S.violaceus chloramphenicol 3-O phosphotransferase.

This is Putative O-phosphotransferase MT2714 from Mycobacterium tuberculosis (strain CDC 1551 / Oshkosh).